We begin with the raw amino-acid sequence, 34 residues long: Protamine-Z1/Z2 (34 aa).

A disordered region spans residues 1–34 (PRRRRRSSRPVRRRRRYRRSTVARRRRRVVRRRR).

Testis.

The protein resides in the nucleus. Its subcellular location is the chromosome. Functionally, protamines substitute for histones in the chromatin of sperm during the haploid phase of spermatogenesis. They compact sperm DNA into a highly condensed, stable and inactive complex. This chain is Protamine-Z1/Z2, found in Thunnus thynnus (Atlantic bluefin tuna).